The sequence spans 558 residues: MDIKRTVLWVIFFMSAVMLFDNWQRSHGRPSMFFPNVTQTNTASNATNGNGASGASAAAAANALPAAATGAAPATTAPAAQAQLVRFSTDVYNGEIDTRGGTLAKLTLTKAGDGKQPDLSVTLFDHTANHTYLARTGLLGGDFPNHNDVYAQVAGPTSLAADQNTLKLSFESPVKGGVKVVKTYTFTRGSYVIGVDTKIENVGAAPVTPSVYMELVRDNSSVETPMFSHTFLGPAVYTDQKHFQKITFGDIDKNKADYVTSADNGWIAMVQHYFASAWIPQSGAKRDIYVEKIDPTLYRVGVKQPVEAIAPGQSADVSARLFAGPEEERMLEGIAPGLELVKDYGWVTIIAKPLFWLLEKIHGFVGNWGWAIVLLTLLIKAVFFPLSAASYKSMARMKEITPRMQALRERFKSDPQKMNAALMELYKTEKVNPFGGCLPVVIQIPVFISLYWVLLASVEMRGAPWVLWIHDLSQRDPYFILPVLMAVSMFVQTKLNPTPPDPVQAKMMMFMPIAFSVMFFFFPAGLVLYYVVNNVLSIAQQYYITRTLGGAAAKKKAS.

5 consecutive transmembrane segments (helical) span residues 3–23 (IKRT…FDNW), 364–384 (FVGN…AVFF), 438–458 (LPVV…LASV), 477–497 (PYFI…KLNP), and 508–528 (MMFM…GLVL).

It belongs to the OXA1/ALB3/YidC family. Type 1 subfamily. Interacts with the Sec translocase complex via SecD. Specifically interacts with transmembrane segments of nascent integral membrane proteins during membrane integration.

The protein localises to the cell inner membrane. Required for the insertion and/or proper folding and/or complex formation of integral membrane proteins into the membrane. Involved in integration of membrane proteins that insert both dependently and independently of the Sec translocase complex, as well as at least some lipoproteins. Aids folding of multispanning membrane proteins. The polypeptide is Membrane protein insertase YidC (Burkholderia mallei (strain NCTC 10247)).